The primary structure comprises 156 residues: Arginine repressor (156 aa).

Belongs to the ArgR family.

It localises to the cytoplasm. The protein operates within amino-acid biosynthesis; L-arginine biosynthesis [regulation]. In terms of biological role, regulates arginine biosynthesis genes. The protein is Arginine repressor of Klebsiella pneumoniae (strain 342).